Here is an 85-residue protein sequence, read N- to C-terminus: Alpha-toxin BmalphaTx47 (85 aa).

The N-terminal stretch at 1–19 (MNYLIVISFALLLMTGVQS) is a signal peptide. The region spanning 21 to 83 (RDAYIADSEN…VPIRISGSCR (63 aa)) is the LCN-type CS-alpha/beta domain. 4 cysteine pairs are disulfide-bonded: cysteine 31-cysteine 82, cysteine 35-cysteine 55, cysteine 41-cysteine 65, and cysteine 45-cysteine 67.

It belongs to the long (4 C-C) scorpion toxin superfamily. Sodium channel inhibitor family. Alpha subfamily. In terms of tissue distribution, expressed by the venom gland.

Its subcellular location is the secreted. Functionally, alpha toxins bind voltage-independently at site-3 of sodium channels (Nav) and inhibit the inactivation of the activated channels, thereby blocking neuronal transmission. This toxin expressed with the pET-14b vector has low inhibitory activity on sodium channels (11.33% on rNav1.2/SCN2A, 15.96% on mNav1.4/SCN4A and 5.04% on hNav1.5/SCN5A). When expressed with the pET-28a vector, this toxin has higher inhibitory activities (44.12% on rNav1.2/SCN2A, 25.40% on mNav1.4/SCN4A and 65.34% on hNav1.5/SCN5A). The polypeptide is Alpha-toxin BmalphaTx47 (Olivierus martensii (Manchurian scorpion)).